The sequence spans 201 residues: Hydroxymethylphosphonate dioxygenase (201 aa).

Fe cation is bound by residues His-47, His-71, Asp-72, His-94, His-117, and Asp-174.

Fe(2+) is required as a cofactor.

The catalysed reaction is hydroxymethylphosphonate + O2 = formate + phosphate + 2 H(+). It catalyses the reaction (1R)-(2-amino-1-hydroxyethyl)phosphonate + O2 = glycine + phosphate + 2 H(+). It carries out the reaction (1R)-(1-hydroxyethyl)phosphonate + O2 = acetate + phosphate + 2 H(+). Part of an oxidative pathway for utilization of methylphosphonic acid as a phosphate source. Catalyzes the oxidation of hydroxymethylphosphonic acid to produce formate and phosphate. Can also use (1R)-(2-amino-1-hydroxyethyl)phosphonic acid and (R)-1-hydroxyethylphosphonic acid with similar catalytic efficiency. This Gimesia maris (strain ATCC 29201 / DSM 8797 / 534-30) (Planctomyces maris) protein is Hydroxymethylphosphonate dioxygenase.